The sequence spans 89 residues: Small ribosomal subunit protein uS15 (89 aa).

It belongs to the universal ribosomal protein uS15 family. As to quaternary structure, part of the 30S ribosomal subunit. Forms a bridge to the 50S subunit in the 70S ribosome, contacting the 23S rRNA.

Its function is as follows. One of the primary rRNA binding proteins, it binds directly to 16S rRNA where it helps nucleate assembly of the platform of the 30S subunit by binding and bridging several RNA helices of the 16S rRNA. In terms of biological role, forms an intersubunit bridge (bridge B4) with the 23S rRNA of the 50S subunit in the ribosome. The protein is Small ribosomal subunit protein uS15 of Nitratiruptor sp. (strain SB155-2).